The primary structure comprises 336 residues: MIQKNWQELIKPNKVDFTSSGRTKATLVAEPLERGFGLTLGNALRRVLLSSLRGAAVTAVQIDGVLHEFSSIPGVREDVTDIVLNIKEIAIKMDGDDSKRMVVRKQGPGVVTAGDIQTVGDIEILNPNHVICTLDEGAEIRMEFTVNNGKGYVPAERNRSEDAPIGLIPVDSLYSPVKKVSYKVENTREGQVLDYDKLTMSIETDGSVTGEDAIAFAARILQDQLSVFVNFDEPQKEAEEEAVTELAFNPALLKKVDELELSVRSANCLKNDNIVYIGDLIQKTEAEMLRTPNFGRKSLNEIKEVLASMGLHLGMEVPSWPPENIEDLAKRYEDQY.

The alpha N-terminal domain (alpha-NTD) stretch occupies residues 1–232 (MIQKNWQELI…DQLSVFVNFD (232 aa)). Positions 248–336 (FNPALLKKVD…DLAKRYEDQY (89 aa)) are alpha C-terminal domain (alpha-CTD).

This sequence belongs to the RNA polymerase alpha chain family. In terms of assembly, homodimer. The RNAP catalytic core consists of 2 alpha, 1 beta, 1 beta' and 1 omega subunit. When a sigma factor is associated with the core the holoenzyme is formed, which can initiate transcription.

It carries out the reaction RNA(n) + a ribonucleoside 5'-triphosphate = RNA(n+1) + diphosphate. Its function is as follows. DNA-dependent RNA polymerase catalyzes the transcription of DNA into RNA using the four ribonucleoside triphosphates as substrates. In Sinorhizobium fredii (strain NBRC 101917 / NGR234), this protein is DNA-directed RNA polymerase subunit alpha.